Consider the following 620-residue polypeptide: Chaperone protein HscA homolog (620 aa).

This sequence belongs to the heat shock protein 70 family.

In terms of biological role, chaperone involved in the maturation of iron-sulfur cluster-containing proteins. Has a low intrinsic ATPase activity which is markedly stimulated by HscB. This chain is Chaperone protein HscA homolog, found in Herminiimonas arsenicoxydans.